The primary structure comprises 470 residues: Putative dipeptidase TSTA_079200 (470 aa).

The helical transmembrane segment at 40-60 (AWLFGLGTLGIILASVLLNPF) threads the bilayer. Zn(2+)-binding residues include His-92 and Asp-94. Cys-143 and Cys-237 are joined by a disulfide. Asn-188 carries N-linked (GlcNAc...) asparagine glycosylation. Glu-208 contacts Zn(2+). Residue His-235 participates in substrate binding. Zn(2+) is bound by residues His-279 and His-300. Residues Arg-311 and Asp-371 each contribute to the substrate site.

The protein belongs to the metallo-dependent hydrolases superfamily. Peptidase M19 family. Requires Zn(2+) as cofactor.

It localises to the membrane. It catalyses the reaction an L-aminoacyl-L-amino acid + H2O = 2 an L-alpha-amino acid. Hydrolyzes a wide range of dipeptides. The polypeptide is Putative dipeptidase TSTA_079200 (Talaromyces stipitatus (strain ATCC 10500 / CBS 375.48 / QM 6759 / NRRL 1006) (Penicillium stipitatum)).